Consider the following 401-residue polypeptide: Tyrosine--tRNA ligase (401 aa).

The 'HIGH' region signature appears at 45-54; the sequence is PTAPDLHLGH. The 'KMSKS' region signature appears at 230–234; it reads KMSKS. Residue K233 participates in ATP binding. The S4 RNA-binding domain occupies 339–399; that stretch reads IWLAKALVEC…GKRKFAKLKV (61 aa).

This sequence belongs to the class-I aminoacyl-tRNA synthetase family. TyrS type 2 subfamily. Homodimer.

Its subcellular location is the cytoplasm. The catalysed reaction is tRNA(Tyr) + L-tyrosine + ATP = L-tyrosyl-tRNA(Tyr) + AMP + diphosphate + H(+). Its function is as follows. Catalyzes the attachment of tyrosine to tRNA(Tyr) in a two-step reaction: tyrosine is first activated by ATP to form Tyr-AMP and then transferred to the acceptor end of tRNA(Tyr). The sequence is that of Tyrosine--tRNA ligase from Campylobacter jejuni subsp. jejuni serotype O:2 (strain ATCC 700819 / NCTC 11168).